The sequence spans 285 residues: MNTVKTLRELRAAVAQARAEGKQIGFVPTMGNLHAGHASLVQIAAQRADFVVASIFVNPLQFGAGEDLDKYPRTLAADQERLLAAGCHLLFHPDAAEMYPHGMGDQTRVTVPGVSEGLCGASRPGHFEGVATVVTKLFNMVQPDLAVFGEKDYQQLAVIRALVQDLNMPIQIIGAPTQRAEDGLALSSRNGYLSAEQRAVAPALYRSLQSIAEALHHGARDYARLIETAQTQQREAGFTPDYLEIRNALNLRPAQLDDRHLVVLTAAHLGSTRLIDNLLVELAGQ.

Position 30–37 (30–37 (MGNLHAGH)) interacts with ATP. The active-site Proton donor is the His-37. Gln-61 is a binding site for (R)-pantoate. Residue Gln-61 coordinates beta-alanine. Position 149 to 152 (149 to 152 (GEKD)) interacts with ATP. Gln-155 provides a ligand contact to (R)-pantoate. ATP is bound at residue 186-189 (LSSR).

Belongs to the pantothenate synthetase family. In terms of assembly, homodimer.

It localises to the cytoplasm. It catalyses the reaction (R)-pantoate + beta-alanine + ATP = (R)-pantothenate + AMP + diphosphate + H(+). It functions in the pathway cofactor biosynthesis; (R)-pantothenate biosynthesis; (R)-pantothenate from (R)-pantoate and beta-alanine: step 1/1. Functionally, catalyzes the condensation of pantoate with beta-alanine in an ATP-dependent reaction via a pantoyl-adenylate intermediate. This is Pantothenate synthetase from Ectopseudomonas mendocina (strain ymp) (Pseudomonas mendocina).